The chain runs to 168 residues: Ubiquitin-conjugating enzyme E2 2 (168 aa).

Residues 4–150 (PAKRRLMRDF…VRETVENSWN (147 aa)) form the UBC core domain. Cys88 functions as the Glycyl thioester intermediate in the catalytic mechanism. The tract at residues 143-168 (ETVENSWNEDDEDEDEDEDEDIDDAE) is disordered. The segment covering 149-168 (WNEDDEDEDEDEDEDIDDAE) has biased composition (acidic residues).

The protein belongs to the ubiquitin-conjugating enzyme family.

It localises to the cytoplasm. It is found in the nucleus. It carries out the reaction S-ubiquitinyl-[E1 ubiquitin-activating enzyme]-L-cysteine + [E2 ubiquitin-conjugating enzyme]-L-cysteine = [E1 ubiquitin-activating enzyme]-L-cysteine + S-ubiquitinyl-[E2 ubiquitin-conjugating enzyme]-L-cysteine.. The protein operates within protein modification; protein ubiquitination. Its function is as follows. Catalyzes the covalent attachment of ubiquitin to other proteins. Plays a role in transcription regulation by catalyzing the monoubiquitination of histone H2B to form H2BK123ub1. H2BK123ub1 gives a specific tag for epigenetic transcriptional activation and is also a prerequisite for H3K4me and H3K79me formation. Also involved in postreplication repair of UV-damaged DNA, in N-end rule-dependent protein degradation and in sporulation. This is Ubiquitin-conjugating enzyme E2 2 (UBC2) from Debaryomyces hansenii (strain ATCC 36239 / CBS 767 / BCRC 21394 / JCM 1990 / NBRC 0083 / IGC 2968) (Yeast).